We begin with the raw amino-acid sequence, 190 residues long: Elongation factor P (190 aa).

It belongs to the elongation factor P family.

The protein resides in the cytoplasm. It functions in the pathway protein biosynthesis; polypeptide chain elongation. Functionally, involved in peptide bond synthesis. Stimulates efficient translation and peptide-bond synthesis on native or reconstituted 70S ribosomes in vitro. Probably functions indirectly by altering the affinity of the ribosome for aminoacyl-tRNA, thus increasing their reactivity as acceptors for peptidyl transferase. The chain is Elongation factor P from Pseudomonas fluorescens (strain SBW25).